Here is a 375-residue protein sequence, read N- to C-terminus: Odorant receptor 49b (375 aa).

Topologically, residues 1 to 28 (MFEDIQLIYMNIKILRFWALLYDKNLRR) are cytoplasmic. A helical membrane pass occupies residues 29 to 49 (YVCIGLASFHIFTQIVYMMST). Residues 50–60 (NEGLTGIIRNS) are Extracellular-facing. The chain crosses the membrane as a helical span at residues 61–77 (YMLVLWINTVLRAYLLL). At 78–121 (ADHDRYLALIQKLTEAYYDLLNLNDSYISEILDQVNKVGKLMAR) the chain is on the cytoplasmic side. Residues 122–142 (GNLFFGMLTSMGFGLYPLSSS) form a helical membrane-spanning segment. The Extracellular segment spans residues 143 to 176 (ERVLPFGSKIPGLNEYESPYYEMWYIFQMLITPM). The helical transmembrane segment at 177–197 (GCCMYIPYTSLIVGLIMFGIV) threads the bilayer. The Cytoplasmic portion of the chain corresponds to 198 to 251 (RCKALQHRLRQVALKHPYGDRDPRELREEIIACIRYQQSIIEYMDHINELTTMM). A helical transmembrane segment spans residues 252–272 (FLFELMAFSALLCALLFMLII). Over 273–278 (VSGTSQ) the chain is Extracellular. The helical transmembrane segment at 279 to 299 (LIIVCMYINMILAQILALYWY) threads the bilayer. Residues 300-342 (ANELREQNLAVATAAYETEWFTFDVPLRKNILFMMMRAQRPAA) lie on the Cytoplasmic side of the membrane. A helical transmembrane segment spans residues 343–363 (ILLGNIRPITLELFQNLLNTT). The Extracellular portion of the chain corresponds to 364-375 (YTFFTVLKRVYG).

This sequence belongs to the insect chemoreceptor superfamily. Heteromeric odorant receptor channel (TC 1.A.69) family. Or30a subfamily. Interacts with Orco. Complexes exist early in the endomembrane system in olfactory sensory neurons (OSNs), coupling these complexes to the conserved ciliary trafficking pathway. Expressed in olfactory sensory neurons in the antenna.

It is found in the cell membrane. In terms of biological role, odorant receptor which mediates acceptance or avoidance behavior, depending on its substrates. The odorant receptor repertoire encodes a large collection of odor stimuli that vary widely in identity, intensity, and duration. May form a complex with Orco to form odorant-sensing units, providing sensitive and prolonged odorant signaling and calcium permeability. This chain is Odorant receptor 49b (Or49b), found in Drosophila melanogaster (Fruit fly).